Here is a 394-residue protein sequence, read N- to C-terminus: Elongation factor Tu 1 (394 aa).

Residues 10-204 (KPHVNVGTIG…ALDTYIPEPE (195 aa)) enclose the tr-type G domain. A G1 region spans residues 19 to 26 (GHVDHGKT). Residue 19-26 (GHVDHGKT) coordinates GTP. Residue threonine 26 participates in Mg(2+) binding. The segment at 60-64 (GITIS) is G2. Residues 81-84 (DCPG) are G3. GTP contacts are provided by residues 81–85 (DCPGH) and 136–139 (NKCD). Residues 136-139 (NKCD) are G4. The interval 174 to 176 (SAL) is G5.

It belongs to the TRAFAC class translation factor GTPase superfamily. Classic translation factor GTPase family. EF-Tu/EF-1A subfamily. As to quaternary structure, monomer.

The protein localises to the cytoplasm. It catalyses the reaction GTP + H2O = GDP + phosphate + H(+). Functionally, GTP hydrolase that promotes the GTP-dependent binding of aminoacyl-tRNA to the A-site of ribosomes during protein biosynthesis. In Vibrio vulnificus (strain CMCP6), this protein is Elongation factor Tu 1.